Here is an 817-residue protein sequence, read N- to C-terminus: Protein hunchback (817 aa).

Disordered stretches follow at residues 51–77, 93–132, and 187–252; these read PGTI…HSPL, HNGG…TSSA, and YSQQ…EDQD. A compositionally biased stretch (low complexity) spans 62-76; that stretch reads QQHSSMMASQPQHSP. The segment covering 103 to 119 has biased composition (polar residues); the sequence is FSDNSGAMTPSPNTNVG. Over residues 189–201 the composition is skewed to low complexity; that stretch reads QQQQQQQQRQLQQ. 4 C2H2-type zinc fingers span residues 287–309, 316–338, 344–366, and 372–396; these read HKCK…ARTH, LQCP…IRKH, FQCD…RKSH, and YRCA…KYEH. Disordered regions lie at residues 456–477, 491–513, 564–619, and 666–758; these read PLQQ…SSVA, QNLA…SSQQ, QLQQ…QQTP, and APTS…AGNS. Residues 564–576 show a composition bias toward low complexity; that stretch reads QLQQQQQNKQANE. The span at 577-595 shows a compositional bias: acidic residues; it reads NGEEDEEDNDEVDEDEEEF. Residues 680 to 694 show a composition bias toward polar residues; the sequence is MPPTTSSPIHPSQVN. The span at 721 to 758 shows a compositional bias: low complexity; the sequence is PTTANTSASSTASSSGNSSNSSSTSTSSNSNSSSAGNS. C2H2-type zinc fingers lie at residues 764 to 786 and 792 to 816; these read YECK…MGYH and FKCN…RNAH.

This sequence belongs to the hunchback C2H2-type zinc-finger protein family.

Its subcellular location is the nucleus. Gap class segmentation protein that controls development of head structures. In Musca domestica (House fly), this protein is Protein hunchback (hb).